Here is a 139-residue protein sequence, read N- to C-terminus: Protein archease (139 aa).

D12, D138, and I139 together coordinate Ca(2+).

The protein belongs to the archease family.

Functionally, activates the tRNA-splicing ligase complex by facilitating the enzymatic turnover of catalytic subunit RtcB. Acts by promoting the guanylylation of RtcB, a key intermediate step in tRNA ligation. Can also alter the NTP specificity of RtcB such that ATP, dGTP or ITP is used efficiently. This chain is Protein archease, found in Saccharolobus islandicus (strain Y.G.57.14 / Yellowstone #1) (Sulfolobus islandicus).